The chain runs to 387 residues: Formate-dependent phosphoribosylglycinamide formyltransferase (387 aa).

N(1)-(5-phospho-beta-D-ribosyl)glycinamide-binding positions include 21 to 22 and Glu81; that span reads EL. ATP is bound by residues Arg113, Lys154, 159 to 164, 193 to 196, and Glu201; these read SSGHGQ and EEFI. The ATP-grasp domain maps to 118 to 306; that stretch reads TFAAEEVGVK…EFALHLRAVL (189 aa). Mg(2+) is bound by residues Glu265 and Glu277. Residues Asp284, Lys352, and 359-360 each bind N(1)-(5-phospho-beta-D-ribosyl)glycinamide; that span reads RR.

Belongs to the PurK/PurT family. In terms of assembly, homodimer.

The catalysed reaction is N(1)-(5-phospho-beta-D-ribosyl)glycinamide + formate + ATP = N(2)-formyl-N(1)-(5-phospho-beta-D-ribosyl)glycinamide + ADP + phosphate + H(+). It participates in purine metabolism; IMP biosynthesis via de novo pathway; N(2)-formyl-N(1)-(5-phospho-D-ribosyl)glycinamide from N(1)-(5-phospho-D-ribosyl)glycinamide (formate route): step 1/1. Involved in the de novo purine biosynthesis. Catalyzes the transfer of formate to 5-phospho-ribosyl-glycinamide (GAR), producing 5-phospho-ribosyl-N-formylglycinamide (FGAR). Formate is provided by PurU via hydrolysis of 10-formyl-tetrahydrofolate. The chain is Formate-dependent phosphoribosylglycinamide formyltransferase from Wolinella succinogenes (strain ATCC 29543 / DSM 1740 / CCUG 13145 / JCM 31913 / LMG 7466 / NCTC 11488 / FDC 602W) (Vibrio succinogenes).